Here is a 195-residue protein sequence, read N- to C-terminus: Imidazoleglycerol-phosphate dehydratase (195 aa).

It belongs to the imidazoleglycerol-phosphate dehydratase family.

It is found in the cytoplasm. It catalyses the reaction D-erythro-1-(imidazol-4-yl)glycerol 3-phosphate = 3-(imidazol-4-yl)-2-oxopropyl phosphate + H2O. It functions in the pathway amino-acid biosynthesis; L-histidine biosynthesis; L-histidine from 5-phospho-alpha-D-ribose 1-diphosphate: step 6/9. The polypeptide is Imidazoleglycerol-phosphate dehydratase (Endomicrobium trichonymphae).